The following is a 457-amino-acid chain: Cysteine desulfurase (457 aa).

Pyridoxal 5'-phosphate is bound by residues Ala-127, Thr-128, Gln-235, Ser-255, and His-257. The residue at position 258 (Lys-258) is an N6-(pyridoxal phosphate)lysine. Thr-295 provides a ligand contact to pyridoxal 5'-phosphate. Cys-381 functions as the Cysteine persulfide intermediate in the catalytic mechanism. Cys-381 provides a ligand contact to [2Fe-2S] cluster. A Zn(2+)-binding site is contributed by Cys-381. Residue Cys-381 is modified to Cysteine persulfide.

This sequence belongs to the class-V pyridoxal-phosphate-dependent aminotransferase family. NifS/IscS subfamily. Homodimer. Component of the mitochondrial core iron-sulfur cluster (ISC) complex composed of NFS1, LYRM4, NDUFAB1, ISCU, FXN, and FDX2; this complex is a heterohexamer containing two copies of each monomer. Component of cyteine desulfurase complex composed of NFS1, LYRM4 and NDUFAB1; this complex contributes to the activation of cysteine desulfurase activity and NFS1 stabilization. Interacts (homodimer form) with ISCU (D-state); each monomer interacts with the C-terminal regions of each NFS1 monomer. Interacts with HSPA9. Interacts (via homodimer form) with FDX2. Interacts (via homodimer form) with FXN. Interacts with LYRM4. Component of a complex composed of FXN, NFS1, LYRM4 and ISCU. In terms of assembly, monomer. Homodimer. Oligomer. Interacts with ISCU. Component of the cysteine desulfurase complex composed of NFS1 and LYRM4; this complex contributes to the activation of cysteine desulfurase activity. Interacts with MOCS3. Pyridoxal 5'-phosphate is required as a cofactor. N-gluconoylated. In terms of processing, cysteine persulfide intermediate is reduced by thiol-containing molecules like glutathione and L-cysteine. Persulfide reduction is a rate-limiting step of cysteine desulfurase catalytic cycle.

The protein resides in the mitochondrion. The protein localises to the cytoplasm. It is found in the nucleus. Its subcellular location is the cytoskeleton. It localises to the microtubule organizing center. The protein resides in the centrosome. The enzyme catalyses (sulfur carrier)-H + L-cysteine = (sulfur carrier)-SH + L-alanine. It carries out the reaction L-cysteinyl-[cysteine desulfurase] + L-cysteine = S-sulfanyl-L-cysteinyl-[cysteine desulfurase] + L-alanine. Active only in complex with LYRM4. In terms of biological role, cysteine desulfurase, of the core iron-sulfur cluster (ISC) assembly complex, that catalyzes the desulfuration of L-cysteine to L-alanine, as component of the cysteine desulfurase complex leading to the formation of a cysteine persulfide intermediate at the active site cysteine residue and participates in the [2Fe-2S] clusters assembly on the scaffolding protein ISCU. The persulfide is then transferred on the flexible Cys loop from the catalytic site of NFS1 to the surface of NFS1. After the NFS1-linked persulfide sulfur is transferred to one of the conserved Cys residues of the scaffold, a reaction assisted by FXN. The core iron-sulfur cluster (ISC) assembly complex is involved in the de novo synthesis of a [2Fe-2S] cluster, the first step of the mitochondrial iron-sulfur protein biogenesis. This process is initiated by the cysteine desulfurase complex (NFS1:LYRM4:NDUFAB1) that produces persulfide which is delivered on the scaffold protein ISCU in a FXN-dependent manner. Then this complex is stabilized by FDX2 which provides reducing equivalents to accomplish the [2Fe-2S] cluster assembly. Finally, the [2Fe-2S] cluster is transferred from ISCU to chaperone proteins, including HSCB, HSPA9 and GLRX5. Its function is as follows. May catalyze the desulfuration of L-cysteine to L-alanine as component of the cysteine desulfurase complex (NFS1:LYRM4), leading to the formation of a cysteine persulfide intermediate. Acts as a sulfur donor for MOCS3 by transferring the sulfur of the cysteine persulfide intermediate on MOCS3. The polypeptide is Cysteine desulfurase (Pongo abelii (Sumatran orangutan)).